Consider the following 347-residue polypeptide: Holliday junction branch migration complex subunit RuvB (347 aa).

Positions 1–10 are enriched in polar residues; it reads MAIVSSSSGR. The segment at 1-29 is disordered; that stretch reads MAIVSSSSGRKSPCRETALVDPQPAPEEQ. The segment at 13 to 198 is large ATPase domain (RuvB-L); that stretch reads PCRETALVDP…FGLIQRLEFY (186 aa). Residues leucine 37, arginine 38, glycine 79, lysine 82, threonine 83, threonine 84, arginine 188, tyrosine 198, and arginine 235 each contribute to the ATP site. Threonine 83 is a Mg(2+) binding site. Residues 199 to 270 form a small ATPAse domain (RuvB-S) region; the sequence is GQTDLEAIVA…MVAEALSLHR (72 aa). Positions 273 to 347 are head domain (RuvB-H); that stretch reads HRGLDASDRR…AARSHIAEAA (75 aa). Arginine 328 and arginine 333 together coordinate DNA.

Belongs to the RuvB family. As to quaternary structure, homohexamer. Forms an RuvA(8)-RuvB(12)-Holliday junction (HJ) complex. HJ DNA is sandwiched between 2 RuvA tetramers; dsDNA enters through RuvA and exits via RuvB. An RuvB hexamer assembles on each DNA strand where it exits the tetramer. Each RuvB hexamer is contacted by two RuvA subunits (via domain III) on 2 adjacent RuvB subunits; this complex drives branch migration. In the full resolvosome a probable DNA-RuvA(4)-RuvB(12)-RuvC(2) complex forms which resolves the HJ.

The protein localises to the cytoplasm. It carries out the reaction ATP + H2O = ADP + phosphate + H(+). The RuvA-RuvB-RuvC complex processes Holliday junction (HJ) DNA during genetic recombination and DNA repair, while the RuvA-RuvB complex plays an important role in the rescue of blocked DNA replication forks via replication fork reversal (RFR). RuvA specifically binds to HJ cruciform DNA, conferring on it an open structure. The RuvB hexamer acts as an ATP-dependent pump, pulling dsDNA into and through the RuvAB complex. RuvB forms 2 homohexamers on either side of HJ DNA bound by 1 or 2 RuvA tetramers; 4 subunits per hexamer contact DNA at a time. Coordinated motions by a converter formed by DNA-disengaged RuvB subunits stimulates ATP hydrolysis and nucleotide exchange. Immobilization of the converter enables RuvB to convert the ATP-contained energy into a lever motion, pulling 2 nucleotides of DNA out of the RuvA tetramer per ATP hydrolyzed, thus driving DNA branch migration. The RuvB motors rotate together with the DNA substrate, which together with the progressing nucleotide cycle form the mechanistic basis for DNA recombination by continuous HJ branch migration. Branch migration allows RuvC to scan DNA until it finds its consensus sequence, where it cleaves and resolves cruciform DNA. The chain is Holliday junction branch migration complex subunit RuvB from Synechococcus sp. (strain CC9902).